The chain runs to 2299 residues: Acetyl-CoA carboxylase dmxL1 (2299 aa).

Low complexity predominate over residues 21-39 (TSIPASVPASAPPSSSAPH). The segment at 21-41 (TSIPASVPASAPPSSSAPHAA) is disordered. The Biotin carboxylation domain maps to 75-583 (VITNVLIANN…TTGWLDELIT (509 aa)). The region spanning 227-424 (QVAIDADGIV…LPAAQLQIAM (198 aa)) is the ATP-grasp 1 domain. 258–315 (AKEIGFPVMIKASEGGGGKGIRKCEQEEGFEALYNAASSEIPGSPIFIMKLAGNARHL) lines the ATP pocket. The Mg(2+) site is built by E381, E395, and N397. Residues E381, E395, and N397 each coordinate Mn(2+). Positions 710-784 (LEQENDPTQL…EPGDVLGILT (75 aa)) constitute a Biotinyl-binding domain. Residue K751 is modified to N6-biotinyllysine. The tract at residues 1159–1208 (DMEMSSQLSTPSTPATPPTPPYENGKQSKGVGSISDMSNLIENPDKEPTR) is disordered. Residues 1539 to 1887 (PTKALEWLQP…KKNTLVPIGP (349 aa)) form the CoA carboxyltransferase N-terminal domain. The region spanning 1891 to 2205 (PWDRDIVCSP…EEHILKRIAT (315 aa)) is the CoA carboxyltransferase C-terminal domain.

The cofactor is biotin. Mg(2+) serves as cofactor. Mn(2+) is required as a cofactor.

It carries out the reaction hydrogencarbonate + acetyl-CoA + ATP = malonyl-CoA + ADP + phosphate + H(+). The enzyme catalyses N(6)-biotinyl-L-lysyl-[protein] + hydrogencarbonate + ATP = N(6)-carboxybiotinyl-L-lysyl-[protein] + ADP + phosphate + H(+). It functions in the pathway secondary metabolite biosynthesis. Its pathway is lipid metabolism; malonyl-CoA biosynthesis; malonyl-CoA from acetyl-CoA: step 1/1. Functionally, acetyl-CoA carboxylase; part of the gene cluster that mediates the biosynthesis of the dimeric xanthones cryptosporioptides. The pathway begins with the synthesis of atrochrysone thioester by the polyketide synthase dmx-nrPKS. The atrochrysone carboxyl ACP thioesterase dmxR1 then breaks the thioester bond and releases the atrochrysone carboxylic acid from dmx-nrPKS. Atrochrysone carboxylic acid is decarboxylated by the decarboxylase dmxR15, and oxidized by the anthrone oxygenase dmxR16 to yield emodin. Emodin is then reduced to emodin hydroquinone by the oxidoreductase dmxR7. A-ring reduction by the short chain dehydrogenase dmxR18, dehydration by the scytalone dehydratase-like protein dmxR17 and probable spontaneous re-oxidation, results in overall deoxygenation to chrysophanol. Baeyer-Villiger oxidation by the Baeyer-Villiger monooxygenase (BVMO) dmxR6 then yields monodictylactone in equilibrium with monodictyphenone. In the case of the cryptosporioptides biosynthesis, monodictylactone is reduced at C-12 to an alcohol (by the short chain dehydrogenases dmxR12 or dmxR8) and hydroxylated at C-5 by dmxR9, yielding the electron-rich aromatic which could eliminate H(2)O to form the ortho-quinonemethide, followed by tautomerisation to paraquinone and complete the formal reduction to produce the 10-methylgroup. Conjugate addition of C-4a-OH to the resulting paraquinone by the monooxygenase dmxR10 then gives cyclohexadienone, which is then reduced at C-5 by the short chain dehydrogenase dmxR3 to give the dihydroxanthone. The 6,7-epoxide in the cryptosporioptides could be introduced by the cytochrome P450 monooxygenase dmxL3. The highly reducing PKS dmxL2 manufactures butyrate, which is further carboxylated by dmxL1 to form ethylmalonate. It is not yet clear whether the carboxylation occurs while the butyrate is attached to the ACP of dmxL2, but this unusual fungal metabolite could then be esterified to O-5 by the O-acetyltransferase dmxR13. Finally, dimerization performed by dmxR5 gives the observed dimers cryptosporioptides A, B and C as the final products of the pathway. This Cryptosporiopsis sp. (strain 8999) protein is Acetyl-CoA carboxylase dmxL1.